A 229-amino-acid chain; its full sequence is Protein GLC8 (229 aa).

3 disordered regions span residues 1–21, 35–62, and 107–229; these read MGGI…QQDP, TQKN…EIIG, and QFQD…TKEP. Ser12 is modified (phosphoserine). A compositionally biased stretch (basic and acidic residues) spans 107-117; it reads QFQDIHIDEPK. Phosphothreonine; by PHO85 is present on Thr118. Ser158 is subject to Phosphoserine. The span at 164–173 shows a compositional bias: basic and acidic residues; the sequence is FEIKENKQPD. A compositionally biased stretch (acidic residues) spans 175–184; sequence ETNDENDEDS. Ser184 carries the post-translational modification Phosphoserine. Residues 185–196 show a composition bias toward basic and acidic residues; sequence PEARHKKFEEMR.

In terms of processing, phosphorylated by the cyclin-CDKs PCL6-PHO85 and PCL7-PHO85. Phosphorylation of Thr-118 inactivates GLC8.

Modulator of GLC7 type-1 protein phosphatase. The chain is Protein GLC8 (GLC8) from Saccharomyces cerevisiae (strain ATCC 204508 / S288c) (Baker's yeast).